The following is a 106-amino-acid chain: Large ribosomal subunit protein P1A (106 aa).

Residues 74-106 are disordered; that stretch reads AGGGAAAEEAAEEEKEEEAKEESDDDMGFGLFD. Acidic residues predominate over residues 82–100; the sequence is EAAEEEKEEEAKEESDDDM.

It belongs to the eukaryotic ribosomal protein P1/P2 family. As to quaternary structure, component of the large ribosomal subunit (LSU). Mature ribosomes consist of a small (40S) and a large (60S) subunit. The 40S subunit contains about 32 different proteins and 1 molecule of RNA (18S). The 60S subunit contains 45 different proteins and 3 molecules of RNA (25S, 5.8S and 5S). The 5 acidic ribosomal P-proteins form the stalk structure of the 60S subunit. They are organized as a pentameric complex in which uL10/P0 interacts with 2 heterodimers, P1A-P2B and P1B-P2A. Post-translationally, phosphorylated.

The protein resides in the cytoplasm. Its function is as follows. Component of the ribosome, a large ribonucleoprotein complex responsible for the synthesis of proteins in the cell. The small ribosomal subunit (SSU) binds messenger RNAs (mRNAs) and translates the encoded message by selecting cognate aminoacyl-transfer RNA (tRNA) molecules. The large subunit (LSU) contains the ribosomal catalytic site termed the peptidyl transferase center (PTC), which catalyzes the formation of peptide bonds, thereby polymerizing the amino acids delivered by tRNAs into a polypeptide chain. The nascent polypeptides leave the ribosome through a tunnel in the LSU and interact with protein factors that function in enzymatic processing, targeting, and the membrane insertion of nascent chains at the exit of the ribosomal tunnel. This chain is Large ribosomal subunit protein P1A (RPP1A), found in Candida albicans (strain SC5314 / ATCC MYA-2876) (Yeast).